The following is a 137-amino-acid chain: Putative pre-16S rRNA nuclease (137 aa).

This sequence belongs to the YqgF nuclease family.

It is found in the cytoplasm. Functionally, could be a nuclease involved in processing of the 5'-end of pre-16S rRNA. The polypeptide is Putative pre-16S rRNA nuclease (Buchnera aphidicola subsp. Schizaphis graminum (strain Sg)).